A 1218-amino-acid chain; its full sequence is ABC transporter NFT1 (1218 aa).

At 1-29 (MIKNGTCPYWERDDLSECARREYIEFKFP) the chain is on the extracellular side. An N-linked (GlcNAc...) asparagine glycan is attached at Asn-4. A helical membrane pass occupies residues 30-50 (LFILLTGMIYAFCKVFRAFYL). Residues 51 to 103 (RGKNHTNEAPEFEEQGNGNHEYARFSVLRLKSAWESRSFCNVNNRSTFDKFKK) lie on the Cytoplasmic side of the membrane. Residues 104–124 (FIEGAFIVLQLTIHLYILSSM) form a helical membrane-spanning segment. Residues 125–130 (PMDNKK) are Extracellular-facing. A helical transmembrane segment spans residues 131–151 (FFHQGFLVQMFLWILLLVVIT). The Cytoplasmic segment spans residues 152–169 (LRLISASQSFRWVLACKR). A helical transmembrane segment spans residues 170 to 190 (DLWAVSFYSYASLFTLSILPL). The Extracellular portion of the chain corresponds to 191–201 (RSVFIGKIKDK). Residues 202 to 222 (IMVKYIISETFIDLALLLLLS) traverse the membrane as a helical segment. At 223–302 (TSSIEGTRYS…SSKKGRLLPN (80 aa)) the chain is on the cytoplasmic side. A helical membrane pass occupies residues 303-323 (IICYFKAVFISQLFLAFVSSF). In terms of domain architecture, ABC transmembrane type-1 1 spans 311–621 (FISQLFLAFV…IASTVSLLIQ (311 aa)). Over 324-351 (LNFVPSLLMPRILSYVNDPKSKSWNLVS) the chain is Extracellular. A helical membrane pass occupies residues 352–374 (LYVSSMLVSKIIATTCRGQGLFL). Over 375-449 (GEKGTMQLRT…VMSIDAFKVS (75 aa)) the chain is Cytoplasmic. The disordered stretch occupies residues 410–434 (NASTSFEENPDSSEAEPRKKSSRKD). Over residues 424–434 (AEPRKKSSRKD) the composition is skewed to basic and acidic residues. Residues 450 to 470 (EAMNTFYLACEAVFMTVTALM) form a helical membrane-spanning segment. At 471-481 (ILYSLLGWSAF) the chain is on the extracellular side. A helical transmembrane segment spans residues 482 to 504 (AGTFALLAMIPLNFWCATFYGNY). Topologically, residues 505–558 (QADQLILTDKRTSGISEALNSIRVIKLLAWENLFYQKIINVRDGEIRLLKKKAT) are cytoplasmic. A helical transmembrane segment spans residues 559–579 (IFFLNHLIWFFGPTLVSAITF). Over 580-584 (SVFIK) the chain is Extracellular. A helical membrane pass occupies residues 585–605 (FQNQTLTPTIAFTALSLFAIL). Topologically, residues 606 to 953 (RTPMDQIAST…KFSAYKWLAD (348 aa)) are cytoplasmic. One can recognise an ABC transporter domain in the interval 651-892 (FGFEDASMEW…NEFLRESINN (242 aa)). An ATP-binding site is contributed by 686 to 693 (GPTGSGKS). Positions 892-901 (NDSKNTTHNQ) are enriched in polar residues. Residues 892–926 (NDSKNTTHNQIDLKRSTTSKKTKNGDPEGGNSQDE) form a disordered region. Residues 954 to 974 (YFGGLGVVFVFTSSSILIHGI) form a helical membrane-spanning segment. The ABC transmembrane type-1 2 domain maps to 961 to 1218 (VFVFTSSSIL…SSVMIIMKAS (258 aa)). Over 975–1013 (TLSQGFWLRYWLDTGSSGSKSTWLYRIVEGHSNIYFLLT) the chain is Extracellular. A helical membrane pass occupies residues 1014–1034 (YIIIGLVSSFLTSGKVWIAII). At 1035–1082 (SGTNVTKKIFAKLLSSILYAKLRFHNVTPTGRIMNRFSKDMDIIDQQL) the chain is on the cytoplasmic side. Residues 1083-1105 (IPNFEGLSYSVVVCLWIILLIGY) form a helical membrane-spanning segment. The Extracellular portion of the chain corresponds to 1106–1109 (VTPQ). A helical transmembrane segment spans residues 1110-1132 (FLLFAIPLCALYYTVCTLYLRAS). Residues 1133–1197 (RELKRIDNIN…NMATEWITYR (65 aa)) are Cytoplasmic-facing. Residues 1198–1218 (VDIIGTLVLFSSSVMIIMKAS) form a helical membrane-spanning segment.

This sequence belongs to the ABC transporter superfamily. ABCC family. Conjugate transporter (TC 3.A.1.208) subfamily.

Its subcellular location is the membrane. This chain is ABC transporter NFT1 (NFT1), found in Saccharomyces cerevisiae (strain ATCC 204508 / S288c) (Baker's yeast).